A 74-amino-acid polypeptide reads, in one-letter code: UPF0435 protein GWCH70_0415 (74 aa).

The protein belongs to the UPF0435 family.

This is UPF0435 protein GWCH70_0415 from Geobacillus sp. (strain WCH70).